Reading from the N-terminus, the 141-residue chain is Putative pre-16S rRNA nuclease (141 aa).

It belongs to the YqgF nuclease family.

Its subcellular location is the cytoplasm. In terms of biological role, could be a nuclease involved in processing of the 5'-end of pre-16S rRNA. This chain is Putative pre-16S rRNA nuclease, found in Cupriavidus taiwanensis (strain DSM 17343 / BCRC 17206 / CCUG 44338 / CIP 107171 / LMG 19424 / R1) (Ralstonia taiwanensis (strain LMG 19424)).